The chain runs to 442 residues: 3-phosphoshikimate 1-carboxyvinyltransferase (442 aa).

Residues K25, S26, and R30 each contribute to the 3-phosphoshikimate site. Position 25 (K25) interacts with phosphoenolpyruvate. Phosphoenolpyruvate-binding residues include G96 and R124. 3-phosphoshikimate-binding residues include S171, S172, Q173, S203, D325, and K352. A phosphoenolpyruvate-binding site is contributed by Q173. D325 (proton acceptor) is an active-site residue. Phosphoenolpyruvate is bound by residues R356, R400, and K425.

It belongs to the EPSP synthase family. In terms of assembly, monomer.

The protein localises to the cytoplasm. The catalysed reaction is 3-phosphoshikimate + phosphoenolpyruvate = 5-O-(1-carboxyvinyl)-3-phosphoshikimate + phosphate. Its pathway is metabolic intermediate biosynthesis; chorismate biosynthesis; chorismate from D-erythrose 4-phosphate and phosphoenolpyruvate: step 6/7. In terms of biological role, catalyzes the transfer of the enolpyruvyl moiety of phosphoenolpyruvate (PEP) to the 5-hydroxyl of shikimate-3-phosphate (S3P) to produce enolpyruvyl shikimate-3-phosphate and inorganic phosphate. This chain is 3-phosphoshikimate 1-carboxyvinyltransferase, found in Bordetella bronchiseptica (strain ATCC BAA-588 / NCTC 13252 / RB50) (Alcaligenes bronchisepticus).